A 262-amino-acid polypeptide reads, in one-letter code: Taurine import ATP-binding protein TauB (262 aa).

The region spanning 4 to 233 is the ABC transporter domain; that stretch reads LELERISAQY…RYAAGESARA (230 aa). 38–45 is an ATP binding site; the sequence is GPSGSGKT.

This sequence belongs to the ABC transporter superfamily. Taurine importer (TC 3.A.1.17.1) family. The complex is composed of two ATP-binding proteins (TauB), two transmembrane proteins (TauC) and a solute-binding protein (TauA).

It is found in the cell inner membrane. It carries out the reaction taurine(out) + ATP + H2O = taurine(in) + ADP + phosphate + H(+). In terms of biological role, part of the ABC transporter complex TauABC involved in taurine import. Responsible for energy coupling to the transport system. This chain is Taurine import ATP-binding protein TauB, found in Pseudomonas putida (strain ATCC 47054 / DSM 6125 / CFBP 8728 / NCIMB 11950 / KT2440).